The chain runs to 243 residues: NAD(P)H-quinone oxidoreductase subunit K, chloroplastic (243 aa).

The [4Fe-4S] cluster site is built by Cys65, Cys66, Cys130, and Cys161.

The protein belongs to the complex I 20 kDa subunit family. NDH is composed of at least 16 different subunits, 5 of which are encoded in the nucleus. It depends on [4Fe-4S] cluster as a cofactor.

The protein localises to the plastid. The protein resides in the chloroplast thylakoid membrane. The catalysed reaction is a plastoquinone + NADH + (n+1) H(+)(in) = a plastoquinol + NAD(+) + n H(+)(out). The enzyme catalyses a plastoquinone + NADPH + (n+1) H(+)(in) = a plastoquinol + NADP(+) + n H(+)(out). In terms of biological role, NDH shuttles electrons from NAD(P)H:plastoquinone, via FMN and iron-sulfur (Fe-S) centers, to quinones in the photosynthetic chain and possibly in a chloroplast respiratory chain. The immediate electron acceptor for the enzyme in this species is believed to be plastoquinone. Couples the redox reaction to proton translocation, and thus conserves the redox energy in a proton gradient. The protein is NAD(P)H-quinone oxidoreductase subunit K, chloroplastic of Marchantia polymorpha (Common liverwort).